Here is a 70-residue protein sequence, read N- to C-terminus: Biotin carboxyl carrier protein of acetyl-CoA carboxylase (70 aa).

The Biotinyl-binding domain maps to 1–69 (GTVVAPMVGL…QDGIKLFALK (69 aa)). Lys35 is subject to N6-biotinyllysine.

It is found in the plastid. Its subcellular location is the chloroplast. The protein operates within lipid metabolism; fatty acid biosynthesis. In terms of biological role, this protein is a component of the acetyl coenzyme A carboxylase complex; first, biotin carboxylase catalyzes the carboxylation of the carrier protein and then the transcarboxylase transfers the carboxyl group to form malonyl-CoA. This Solanum lycopersicum (Tomato) protein is Biotin carboxyl carrier protein of acetyl-CoA carboxylase.